The primary structure comprises 723 residues: Peroxisomal bifunctional enzyme (723 aa).

The interval 1-282 (MAEYTRLHNA…LAERKANKWS (282 aa)) is enoyl-CoA hydratase / isomerase. Residue lysine 38 is modified to N6-succinyllysine. Position 101 (glycine 101) interacts with substrate. Lysine 165 is modified (N6-acetyllysine; alternate). An N6-succinyllysine; alternate modification is found at lysine 165. At lysine 171 the chain carries N6-acetyllysine. Lysine 219 carries the N6-acetyllysine; alternate modification. Lysine 219 is modified (N6-succinyllysine; alternate). Lysine 250 is modified (N6-acetyllysine). N6-succinyllysine occurs at positions 280 and 290. Residues 283–572 (TPSGASWKTA…DVLCELGRFG (290 aa)) are 3-hydroxyacyl-CoA dehydrogenase. Residues lysine 346, lysine 350, and lysine 464 each carry the N6-acetyllysine modification. Lysine 532 carries the post-translational modification N6-succinyllysine. Threonine 548 is modified (phosphothreonine). The residue at position 577 (lysine 577) is an N6-succinyllysine. Lysine 584, lysine 591, and lysine 710 each carry N6-acetyllysine; alternate. N6-succinyllysine; alternate is present on residues lysine 584, lysine 591, and lysine 710. Residues 699 to 723 (KKLASQGNPPQKEWQSLAGSPSSKL) are disordered. Polar residues predominate over residues 703-723 (SQGNPPQKEWQSLAGSPSSKL). Serine 718 bears the Phosphoserine mark. The short motif at 721-723 (SKL) is the Microbody targeting signal element. Residue lysine 722 is modified to N6-succinyllysine.

This sequence in the N-terminal section; belongs to the enoyl-CoA hydratase/isomerase family. The protein in the C-terminal section; belongs to the 3-hydroxyacyl-CoA dehydrogenase family. Monomer. Acetylated, leading to enhanced enzyme activity. Acetylation is enhanced by up to 80% after treatment either with trichostin A (TSA) or with nicotinamide (NAM) with highest increase on Lys-346. Acetylation and enzyme activity increased by about 1.5% on addition of fatty acids.

The protein resides in the peroxisome. The catalysed reaction is a (3S)-3-hydroxyacyl-CoA = a (2E)-enoyl-CoA + H2O. It catalyses the reaction a 4-saturated-(3S)-3-hydroxyacyl-CoA = a (3E)-enoyl-CoA + H2O. The enzyme catalyses a (3Z)-enoyl-CoA = a 4-saturated (2E)-enoyl-CoA. It carries out the reaction a (3E)-enoyl-CoA = a 4-saturated (2E)-enoyl-CoA. The catalysed reaction is a (3S)-3-hydroxyacyl-CoA + NAD(+) = a 3-oxoacyl-CoA + NADH + H(+). It catalyses the reaction (2S,3S)-3-hydroxy-2-methylbutanoyl-CoA = (2E)-2-methylbut-2-enoyl-CoA + H2O. The enzyme catalyses (3S)-hydroxyhexadecanoyl-CoA + NAD(+) = 3-oxohexadecanoyl-CoA + NADH + H(+). It carries out the reaction (3S)-hydroxyhexadecanoyl-CoA = (2E)-hexadecenoyl-CoA + H2O. The catalysed reaction is (2E)-hexadecenedioyl-CoA + H2O = (3S)-hydroxyhexadecanedioyl-CoA. It catalyses the reaction (3S)-hydroxyhexadecanedioyl-CoA + NAD(+) = 3-oxohexadecanedioyl-CoA + NADH + H(+). The enzyme catalyses (3E,5Z)-tetradecadienoyl-CoA = (2E,5Z)-tetradecadienoyl-CoA. It carries out the reaction (3E,5Z)-octadienoyl-CoA = (2E,5Z)-octadienoyl-CoA. The catalysed reaction is (3S)-hydroxydecanoyl-CoA + NAD(+) = 3-oxodecanoyl-CoA + NADH + H(+). It catalyses the reaction (3E)-decenoyl-CoA = (2E)-decenoyl-CoA. The enzyme catalyses (3Z)-hexenoyl-CoA = (2E)-hexenoyl-CoA. It carries out the reaction (3E)-hexenoyl-CoA = (2E)-hexenoyl-CoA. The catalysed reaction is (3S)-hydroxydecanoyl-CoA = (2E)-decenoyl-CoA + H2O. It catalyses the reaction (3S)-hydroxyhexanoyl-CoA = (2E)-hexenoyl-CoA + H2O. The protein operates within lipid metabolism; fatty acid beta-oxidation. With respect to regulation, enzyme activity enhanced by acetylation. Functionally, peroxisomal trifunctional enzyme possessing 2-enoyl-CoA hydratase, 3-hydroxyacyl-CoA dehydrogenase, and delta 3, delta 2-enoyl-CoA isomerase activities. Catalyzes two of the four reactions of the long chain fatty acids peroxisomal beta-oxidation pathway. Can also use branched-chain fatty acids such as 2-methyl-2E-butenoyl-CoA as a substrate, which is hydrated into (2S,3S)-3-hydroxy-2-methylbutanoyl-CoA. Optimal isomerase for 2,5 double bonds into 3,5 form isomerization in a range of enoyl-CoA species. Also able to isomerize both 3-cis and 3-trans double bonds into the 2-trans form in a range of enoyl-CoA species. Regulates the amount of medium-chain dicarboxylic fatty acids which are essential regulators of all fatty acid oxidation pathways. Also involved in the degradation of long-chain dicarboxylic acids through peroxisomal beta-oxidation. The polypeptide is Peroxisomal bifunctional enzyme (EHHADH) (Pongo abelii (Sumatran orangutan)).